Here is a 387-residue protein sequence, read N- to C-terminus: Colicin-N (387 aa).

Residues 1–11 are compositionally biased toward polar residues; it reads MGSNGADNAHN. The segment at 1-106 is disordered; the sequence is MGSNGADNAH…ITITPDNSKP (106 aa). A compositionally biased stretch (gly residues) spans 14 to 30; the sequence is FGGGKNPGIGNTSGAGS. Over residues 31 to 48 the composition is skewed to low complexity; it reads NGSASSNRGNSNGWSWSN. Gly residues predominate over residues 78–87; it reads GNSGNRGNNG. 2 helical membrane-spanning segments follow: residues 325 to 345 and 350 to 370; these read IIGG…LSFL and LAVT…SSFI.

Belongs to the channel forming colicin family.

The protein localises to the cell membrane. Functionally, this colicin is a channel-forming colicin. This class of transmembrane toxins depolarize the cytoplasmic membrane, leading to dissipation of cellular energy. Its function is as follows. Colicins are polypeptide toxins produced by and active against E.coli and closely related bacteria. In Escherichia coli, this protein is Colicin-N (cna).